The sequence spans 76 residues: Large ribosomal subunit protein uL29 (76 aa).

Belongs to the universal ribosomal protein uL29 family.

This chain is Large ribosomal subunit protein uL29, found in Corynebacterium glutamicum (strain R).